Reading from the N-terminus, the 254-residue chain is Putative epimerase LsrE (254 aa).

The helical transmembrane segment at 14–34 (VALLASYPLSVGILAGQWIAL) threads the bilayer. The a divalent metal cation site is built by histidine 50, aspartate 52, and histidine 81. Aspartate 52 functions as the Proton acceptor in the catalytic mechanism. Substrate-binding positions include histidine 81, 166 to 169 (GYGS), 199 to 201 (DGS), and 221 to 222 (GS). Position 199 (aspartate 199) interacts with a divalent metal cation. Aspartate 199 (proton donor) is an active-site residue.

It belongs to the ribulose-phosphate 3-epimerase family. The cofactor is a divalent metal cation.

It is found in the cell membrane. This chain is Putative epimerase LsrE (lsrE), found in Salmonella paratyphi A (strain ATCC 9150 / SARB42).